The primary structure comprises 86 residues: UPF0297 protein SSP1144 (86 aa).

This sequence belongs to the UPF0297 family.

This is UPF0297 protein SSP1144 from Staphylococcus saprophyticus subsp. saprophyticus (strain ATCC 15305 / DSM 20229 / NCIMB 8711 / NCTC 7292 / S-41).